We begin with the raw amino-acid sequence, 439 residues long: Homogentisate 1,2-dioxygenase (439 aa).

The Proton acceptor role is filled by H293. Fe cation-binding residues include H336 and E342. Homogentisate is bound by residues Y351 and H372. Residue H372 participates in Fe cation binding.

It belongs to the homogentisate dioxygenase family. In terms of assembly, hexamer; dimer of trimers. Fe cation is required as a cofactor.

It carries out the reaction homogentisate + O2 = 4-maleylacetoacetate + H(+). Its pathway is amino-acid degradation; L-phenylalanine degradation; acetoacetate and fumarate from L-phenylalanine: step 4/6. Involved in the catabolism of homogentisate (2,5-dihydroxyphenylacetate or 2,5-OH-PhAc), a central intermediate in the degradation of phenylalanine and tyrosine. Catalyzes the oxidative ring cleavage of the aromatic ring of homogentisate to yield maleylacetoacetate. In Cupriavidus pinatubonensis (strain JMP 134 / LMG 1197) (Cupriavidus necator (strain JMP 134)), this protein is Homogentisate 1,2-dioxygenase.